The following is a 685-amino-acid chain: Stromal interaction molecule 1 (685 aa).

Positions Met-1–Ser-22 are cleaved as a signal peptide. The Extracellular segment spans residues Leu-23–Asp-213. Positions Ser-24 to Ser-43 are disordered. Residues Thr-32–Glu-41 are compositionally biased toward low complexity. 2 EF-hand domains span residues Ser-64–Asn-97 and Thr-102–Ala-126. Residues Asp-76, Asp-78, Asn-80, Asp-82, and Glu-87 each coordinate Ca(2+). N-linked (GlcNAc...) asparagine glycans are attached at residues Asn-131 and Asn-171. The SAM domain occupies Trp-132–Phe-200. Residues Phe-214–Asn-234 form a helical membrane-spanning segment. Over Arg-235 to Lys-685 the chain is Cytoplasmic. The stretch at Leu-248 to Val-442 forms a coiled coil. Ser-257 bears the Phosphoserine mark. Residues Pro-344–Val-442 are SOAR/CAD. Positions Asp-475–Glu-483 are contributes to fast Ca(2+)-dependent inactivation of CRAC channels. Low complexity predominate over residues Met-490–Val-499. The disordered stretch occupies residues Met-490–Arg-542. Thr-504 carries the post-translational modification Phosphothreonine. Residue Ser-512 is modified to Phosphoserine. A compositionally biased stretch (basic and acidic residues) spans Asp-515–Arg-532. Position 517 is a phosphothreonine (Thr-517). Residues Ser-519, Ser-521, Ser-523, Ser-524, Ser-567, Ser-575, Ser-602, Ser-608, Ser-618, Ser-621, and Ser-628 each carry the phosphoserine modification. Positions Leu-596–Lys-685 are disordered. Residues Ser-608 to Ser-620 are compositionally biased toward low complexity. The Microtubule tip localization signal motif lies at Thr-642–Pro-645. Residues Glu-655 to Asp-666 show a composition bias toward acidic residues. The residue at position 660 (Ser-660) is a Phosphoserine. A Phosphothreonine modification is found at Thr-665. A Phosphoserine modification is found at Ser-668. Basic residues predominate over residues Gly-670–Lys-685. The segment at Lys-672–Lys-685 is required for generation of inwardly rectifying CRAC currents.

Monomer in the presence of Ca(2+). It oligomerizes in absence of Ca(2+). Forms homooligomers and heterooligomers with STIM2. Interacts with pore-forming subunits of CRAC channels, ORAI1, ORAI2 and ORAI3; this interaction is potentiated upon Ca(2+) store depletion. Interacts (via the transmembrane region and the SOAR/CAD domain) with SPPL3; the interaction promotes the binding of STIM1 to ORAI1. Interacts with ORAI1. Interacts with MAPRE1; probably required for targeting to the growing microtubule plus ends. Interacts with CRACR2A/EFCAB4B; the interaction is direct and takes place in absence of Ca(2+). Forms a complex with CRACR2A/EFCAB4B and ORAI1 at low concentration of Ca(2+), the complex dissociates at elevated Ca(2+) concentrations. Interacts with SARAF, promoting a slow inactivation of STIM1-dependent SOCE activity, possibly by facilitating the deoligomerization of STIM1. Interacts with EFHB; the interaction takes place upon Ca(2+)-store depletion and inhibits the association with SARAF. Interacts with ASPH. Interacts with SLC35G1; intracellular Ca(2+)-dependent. May interact with ATP1A1, ATP2A2, ATP2B1, ATP2B4, KPNB1 and XPO1; through SLC35G1. Interacts with TMEM203. Interacts with STIMATE, promoting STIM1 conformational switch. Interacts with TMEM178A. Interacts with CASQ1 (via C-terminal end and preferentially with the monomeric form); this interaction increases in response to a depletion of intracellular Ca(2+), decreases both STIM1 aggregation and clustering, interaction of STIM1 with ORAI1 and store-operated Ca(2+) entry (SOCE) activity. Interacts with ADCY8. Glycosylation is required for cell surface expression. In terms of processing, phosphorylated predominantly on Ser residues.

Its subcellular location is the cell membrane. The protein resides in the endoplasmic reticulum membrane. The protein localises to the sarcoplasmic reticulum. It is found in the cytoplasm. It localises to the cytoskeleton. Acts as a Ca(2+) sensor that gates two major inward rectifying Ca(2+) channels at the plasma membrane: Ca(2+) release-activated Ca(2+) (CRAC) channels and arachidonate-regulated Ca(2+)-selective (ARC) channels. Plays a role in mediating store-operated Ca(2+) entry (SOCE), a Ca(2+) influx following depletion of intracellular Ca(2+) stores. Upon Ca(2+) depletion, translocates from the endoplasmic reticulum to the plasma membrane where it activates CRAC channel pore-forming subunits ORA1, ORA2 and ORAI3 to generate sustained and oscillatory Ca(2+) entry. Involved in enamel formation. This chain is Stromal interaction molecule 1, found in Rattus norvegicus (Rat).